A 424-amino-acid chain; its full sequence is Serine--tRNA ligase (424 aa).

231–233 (TAE) provides a ligand contact to L-serine. Residue 262-264 (RSE) participates in ATP binding. Position 285 (glutamate 285) interacts with L-serine. 349–352 (EISS) serves as a coordination point for ATP. Serine 385 contacts L-serine.

The protein belongs to the class-II aminoacyl-tRNA synthetase family. Type-1 seryl-tRNA synthetase subfamily. In terms of assembly, homodimer. The tRNA molecule binds across the dimer.

Its subcellular location is the cytoplasm. It catalyses the reaction tRNA(Ser) + L-serine + ATP = L-seryl-tRNA(Ser) + AMP + diphosphate + H(+). The enzyme catalyses tRNA(Sec) + L-serine + ATP = L-seryl-tRNA(Sec) + AMP + diphosphate + H(+). It participates in aminoacyl-tRNA biosynthesis; selenocysteinyl-tRNA(Sec) biosynthesis; L-seryl-tRNA(Sec) from L-serine and tRNA(Sec): step 1/1. In terms of biological role, catalyzes the attachment of serine to tRNA(Ser). Is also able to aminoacylate tRNA(Sec) with serine, to form the misacylated tRNA L-seryl-tRNA(Sec), which will be further converted into selenocysteinyl-tRNA(Sec). This Bacillus cereus (strain G9842) protein is Serine--tRNA ligase.